Here is a 228-residue protein sequence, read N- to C-terminus: Ribonuclease 3 (228 aa).

In terms of domain architecture, RNase III spans 3 to 132; it reads IRPLEEHLGI…FLGALYLDQG (130 aa). A Mg(2+)-binding site is contributed by Glu45. Asp49 is a catalytic residue. Asp118 and Glu121 together coordinate Mg(2+). The active site involves Glu121. A DRBM domain is found at 158 to 227; that stretch reads DYKSQLQEFV…AKNALDSINN (70 aa). Positions 205–228 are disordered; that stretch reads GTGRTKKEAEQRAAKNALDSINNS.

The protein belongs to the ribonuclease III family. In terms of assembly, homodimer. Mg(2+) is required as a cofactor.

It is found in the cytoplasm. The enzyme catalyses Endonucleolytic cleavage to 5'-phosphomonoester.. Digests double-stranded RNA. Involved in the processing of primary rRNA transcript to yield the immediate precursors to the large and small rRNAs (23S and 16S). Processes some mRNAs, and tRNAs when they are encoded in the rRNA operon. Processes pre-crRNA and tracrRNA of type II CRISPR loci if present in the organism. This chain is Ribonuclease 3, found in Oceanobacillus iheyensis (strain DSM 14371 / CIP 107618 / JCM 11309 / KCTC 3954 / HTE831).